Here is a 619-residue protein sequence, read N- to C-terminus: CREB-regulated transcription coactivator 3 (619 aa).

A phosphoserine mark is found at Ser-4 and Ser-62. Residues Ser-129–His-148 form a disordered region. Position 160 is a phosphothreonine (Thr-160). At Ser-162 the chain carries Phosphoserine; by SIK2. Lys-232 is covalently cross-linked (Glycyl lysine isopeptide (Lys-Gly) (interchain with G-Cter in SUMO2)). A phosphoserine mark is found at Ser-273, Ser-329, Ser-332, Ser-370, Ser-391, Ser-396, and Ser-410. The interval Ser-375 to Leu-478 is disordered. Residues Ser-380–Ala-401 form a required for interaction with PPP2CA and PPP2R1A region. Polar residues-rich tracts occupy residues Phe-405–Leu-415 and Gln-422–Leu-431. Ser-443 is subject to Phosphoserine. Residues Ser-443–Leu-454 are compositionally biased toward pro residues. Over residues Pro-455–Leu-478 the composition is skewed to low complexity.

This sequence belongs to the TORC family. Binding, as a tetramer, through its N-terminal region, with the bZIP domain of CREB1 enhances recruitment of TAF4 to the promoter. 'Arg-314' in the bZIP domain of CREB1 is essential for this interaction. Interacts (when phosphorylated at Ser-162 and Se-273) with 14-3-3 proteins. Interacts with YWHAE. Interacts (when phosphorylated at Ser-391) with phosphatase PP2A catalytic subunit PPP2CA and regulatory subunits PPP2R1A and PPP2R2A. Phosphorylation/dephosphorylation states of Ser-273 are required for regulating transduction of CREB activity. CRTCs/TORCs are inactive when phosphorylated, and active when dephosphorylated at this site. May be phosphorylated at Ser-391 by MAPK3/ERK1 and/or MAPK1/ERK2 or by some cyclin-dependent kinases such as CDK1,CDK2 or CDK5. Following adenylyl cyclase activation, dephosphorylated at Ser-162 and Ser-273 resulting in its dissociation from 14-3-3 proteins probably promoting CRTC3 translocation into the nucleus. In terms of tissue distribution, expressed in brown adipose tissues.

The protein localises to the nucleus. It is found in the cytoplasm. Functionally, transcriptional coactivator for CREB1 which activates transcription through both consensus and variant cAMP response element (CRE) sites. Acts as a coactivator, in the SIK/TORC signaling pathway, being active when dephosphorylated. Acts independently of CREB1 'Ser-133' phosphorylation. Enhances the interaction of CREB1 with TAF4. Regulates the expression of specific CREB-activated genes such as the steroidogenic gene, StAR. Potent coactivator of PPARGC1A and inducer of mitochondrial biogenesis in muscle cells. The polypeptide is CREB-regulated transcription coactivator 3 (Crtc3) (Mus musculus (Mouse)).